A 150-amino-acid chain; its full sequence is Deoxyuridine 5'-triphosphate nucleotidohydrolase (150 aa).

Substrate-binding positions include 69–71 (RSG), asparagine 82, 86–88 (LID), and methionine 96.

The protein belongs to the dUTPase family. It depends on Mg(2+) as a cofactor.

The enzyme catalyses dUTP + H2O = dUMP + diphosphate + H(+). It functions in the pathway pyrimidine metabolism; dUMP biosynthesis; dUMP from dCTP (dUTP route): step 2/2. Functionally, this enzyme is involved in nucleotide metabolism: it produces dUMP, the immediate precursor of thymidine nucleotides and it decreases the intracellular concentration of dUTP so that uracil cannot be incorporated into DNA. This Alcanivorax borkumensis (strain ATCC 700651 / DSM 11573 / NCIMB 13689 / SK2) protein is Deoxyuridine 5'-triphosphate nucleotidohydrolase.